The primary structure comprises 180 residues: Protein GrpE (180 aa).

Over residues 1–19 the composition is skewed to basic and acidic residues; the sequence is MAEKKRAQEQEKVQEDQKM. Residues 1-25 form a disordered region; the sequence is MAEKKRAQEQEKVQEDQKMQNEQNE.

This sequence belongs to the GrpE family. In terms of assembly, homodimer.

The protein localises to the cytoplasm. Its function is as follows. Participates actively in the response to hyperosmotic and heat shock by preventing the aggregation of stress-denatured proteins, in association with DnaK and GrpE. It is the nucleotide exchange factor for DnaK and may function as a thermosensor. Unfolded proteins bind initially to DnaJ; upon interaction with the DnaJ-bound protein, DnaK hydrolyzes its bound ATP, resulting in the formation of a stable complex. GrpE releases ADP from DnaK; ATP binding to DnaK triggers the release of the substrate protein, thus completing the reaction cycle. Several rounds of ATP-dependent interactions between DnaJ, DnaK and GrpE are required for fully efficient folding. The sequence is that of Protein GrpE from Nitratiruptor sp. (strain SB155-2).